The sequence spans 462 residues: Proline--tRNA ligase (462 aa).

It belongs to the class-II aminoacyl-tRNA synthetase family. ProS type 3 subfamily. Homodimer.

It is found in the cytoplasm. The catalysed reaction is tRNA(Pro) + L-proline + ATP = L-prolyl-tRNA(Pro) + AMP + diphosphate. Functionally, catalyzes the attachment of proline to tRNA(Pro) in a two-step reaction: proline is first activated by ATP to form Pro-AMP and then transferred to the acceptor end of tRNA(Pro). The protein is Proline--tRNA ligase of Thermoplasma acidophilum (strain ATCC 25905 / DSM 1728 / JCM 9062 / NBRC 15155 / AMRC-C165).